The chain runs to 360 residues: N6-Methyl-AMP deaminase (360 aa).

The Zn(2+) site is built by H23 and H25. N(6)-methyl-AMP-binding positions include H25, N27, H73, 105 to 108, D147, and G180; that span reads STPR. H207 contributes to the Zn(2+) binding site. Residues E210, D292, and D293 each contribute to the N(6)-methyl-AMP site. The active-site Proton donor is the E210. D292 provides a ligand contact to Zn(2+).

This sequence belongs to the metallo-dependent hydrolases superfamily. Adenosine and AMP deaminases family. In terms of assembly, monomer. Zn(2+) serves as cofactor.

The enzyme catalyses N(6)-methyl-AMP + H2O + H(+) = IMP + methylamine. Its function is as follows. Catalyzes the hydrolysis of the free cytosolic methylated adenosine nucleotide N(6)-methyl-AMP (N6-mAMP) to produce inositol monophosphate (IMP) and methylamine. Is required for the catabolism of cytosolic N6-mAMP, which is derived from the degradation of mRNA containing N6-methylated adenine (m6A). This is N6-Methyl-AMP deaminase (Mapda) from Mus musculus (Mouse).